Reading from the N-terminus, the 590-residue chain is NADH-ubiquinone oxidoreductase chain 5 (590 aa).

Helical transmembrane passes span 1 to 21 (MNLI…MSIM), 31 to 51 (LMVL…NNEL), 77 to 97 (LLFT…SLWY), 104 to 124 (INKF…IITA), 130 to 150 (LFIG…WWHG), 167 to 187 (IGDI…SINM), 190 to 210 (LMIQ…AAAT), 230 to 250 (TPVS…FLLI), 261 to 281 (IMLT…AAAA), 314 to 336 (AFLH…GSYI), 355 to 375 (LPMT…MPFL), 398 to 418 (IMIT…IMLF), 439 to 461 (HPLA…STLQ), 466 to 486 (VTMP…GVLL), and 568 to 588 (MIKN…LFIM).

It belongs to the complex I subunit 5 family.

Its subcellular location is the mitochondrion inner membrane. It carries out the reaction a ubiquinone + NADH + 5 H(+)(in) = a ubiquinol + NAD(+) + 4 H(+)(out). Functionally, core subunit of the mitochondrial membrane respiratory chain NADH dehydrogenase (Complex I) that is believed to belong to the minimal assembly required for catalysis. Complex I functions in the transfer of electrons from NADH to the respiratory chain. The immediate electron acceptor for the enzyme is believed to be ubiquinone. The protein is NADH-ubiquinone oxidoreductase chain 5 (MT-ND5) of Lycodon semicarinatus (Ryukyu odd-tooth snake).